The sequence spans 447 residues: Tubulin beta-2 chain (447 aa).

The GTP site is built by Gln-11, Glu-69, Ser-138, Gly-142, Thr-143, Gly-144, Asn-204, and Asn-226. Glu-69 is a Mg(2+) binding site. The tract at residues 427–447 (DASISEGEEEYEEEQQLENEE) is disordered. A compositionally biased stretch (acidic residues) spans 432-447 (EGEEEYEEEQQLENEE).

It belongs to the tubulin family. As to quaternary structure, dimer of alpha and beta chains. A typical microtubule is a hollow water-filled tube with an outer diameter of 25 nm and an inner diameter of 15 nM. Alpha-beta heterodimers associate head-to-tail to form protofilaments running lengthwise along the microtubule wall with the beta-tubulin subunit facing the microtubule plus end conferring a structural polarity. Microtubules usually have 13 protofilaments but different protofilament numbers can be found in some organisms and specialized cells. The cofactor is Mg(2+).

The protein localises to the cytoplasm. It localises to the cytoskeleton. Its function is as follows. Tubulin is the major constituent of microtubules, a cylinder consisting of laterally associated linear protofilaments composed of alpha- and beta-tubulin heterodimers. Microtubules grow by the addition of GTP-tubulin dimers to the microtubule end, where a stabilizing cap forms. Below the cap, tubulin dimers are in GDP-bound state, owing to GTPase activity of alpha-tubulin. The sequence is that of Tubulin beta-2 chain (TUB2) from Erysiphe pisi (Pea powdery mildew).